The chain runs to 1024 residues: Beta-galactosidase (1024 aa).

Substrate contacts are provided by Asn103 and Asp202. Asp202 is a binding site for Na(+). Mg(2+)-binding residues include Glu417, His419, and Glu462. Substrate contacts are provided by residues Glu462 and 538-541 (EYAH). Residue Glu462 is the Proton donor of the active site. The active-site Nucleophile is the Glu538. Asn598 contributes to the Mg(2+) binding site. Positions 602 and 605 each coordinate Na(+). Residues Asn605 and Trp1000 each contribute to the substrate site.

The protein belongs to the glycosyl hydrolase 2 family. In terms of assembly, homotetramer. It depends on Mg(2+) as a cofactor. Na(+) serves as cofactor.

The enzyme catalyses Hydrolysis of terminal non-reducing beta-D-galactose residues in beta-D-galactosides.. This chain is Beta-galactosidase, found in Escherichia coli O6:K15:H31 (strain 536 / UPEC).